The following is a 190-amino-acid chain: Xanthine phosphoribosyltransferase (190 aa).

The xanthine site is built by Leu-20 and Asn-27. Residue 128–132 (ANGKA) coordinates 5-phospho-alpha-D-ribose 1-diphosphate. Position 156 (Lys-156) interacts with xanthine.

The protein belongs to the purine/pyrimidine phosphoribosyltransferase family. Xpt subfamily. Homodimer.

The protein localises to the cytoplasm. The catalysed reaction is XMP + diphosphate = xanthine + 5-phospho-alpha-D-ribose 1-diphosphate. Its pathway is purine metabolism; XMP biosynthesis via salvage pathway; XMP from xanthine: step 1/1. Its function is as follows. Converts the preformed base xanthine, a product of nucleic acid breakdown, to xanthosine 5'-monophosphate (XMP), so it can be reused for RNA or DNA synthesis. The protein is Xanthine phosphoribosyltransferase of Pseudomonas putida (strain ATCC 700007 / DSM 6899 / JCM 31910 / BCRC 17059 / LMG 24140 / F1).